A 387-amino-acid polypeptide reads, in one-letter code: Phosphoglycerate kinase (387 aa).

Substrate is bound by residues 21–23 (DLN), Arg-36, 59–62 (HLGR), Arg-113, and Arg-146. Residues Lys-197, Glu-314, and 340 to 343 (GGDT) contribute to the ATP site.

It belongs to the phosphoglycerate kinase family. As to quaternary structure, monomer.

Its subcellular location is the cytoplasm. It catalyses the reaction (2R)-3-phosphoglycerate + ATP = (2R)-3-phospho-glyceroyl phosphate + ADP. Its pathway is carbohydrate degradation; glycolysis; pyruvate from D-glyceraldehyde 3-phosphate: step 2/5. The protein is Phosphoglycerate kinase of Aeromonas hydrophila subsp. hydrophila (strain ATCC 7966 / DSM 30187 / BCRC 13018 / CCUG 14551 / JCM 1027 / KCTC 2358 / NCIMB 9240 / NCTC 8049).